The sequence spans 152 residues: Proteolipid protein 2 (152 aa).

The region spanning 19-137 (FSRTRKGILL…DAYFTFPLRQ (119 aa)) is the MARVEL domain. 3 helical membrane passes run 25 to 45 (GILL…FSAG), 48 to 68 (GYSS…VIYM), and 85 to 105 (FFRT…VLVE). N-linked (GlcNAc...) asparagine glycosylation is present at Asn108. Residues 112-132 (IAAGVLGLLATCLFGYDAYFT) form a helical membrane-spanning segment.

The protein localises to the membrane. May play a role in cell differentiation in the intestinal epithelium. The protein is Proteolipid protein 2 (PLP2) of Oryctolagus cuniculus (Rabbit).